A 249-amino-acid chain; its full sequence is Type III pantothenate kinase (249 aa).

6 to 13 (DCGNSLIK) lines the ATP pocket. Residues Tyr93 and 100 to 103 (GLDR) each bind substrate. The active-site Proton acceptor is Asp102. Residue Asp122 participates in K(+) binding. Thr125 is an ATP binding site. Thr181 contacts substrate.

It belongs to the type III pantothenate kinase family. As to quaternary structure, homodimer. The cofactor is NH4(+). It depends on K(+) as a cofactor.

The protein localises to the cytoplasm. The catalysed reaction is (R)-pantothenate + ATP = (R)-4'-phosphopantothenate + ADP + H(+). It functions in the pathway cofactor biosynthesis; coenzyme A biosynthesis; CoA from (R)-pantothenate: step 1/5. Its function is as follows. Catalyzes the phosphorylation of pantothenate (Pan), the first step in CoA biosynthesis. The polypeptide is Type III pantothenate kinase (Pseudomonas paraeruginosa (strain DSM 24068 / PA7) (Pseudomonas aeruginosa (strain PA7))).